The sequence spans 530 residues: Histone-arginine methyltransferase CARMER (530 aa).

In terms of domain architecture, SAM-dependent MTase PRMT-type spans 141–450 (ASQYFQFYGY…QSYDVTIDLH (310 aa)). The S-adenosyl-L-methionine site is built by Gln154, Arg163, Gly187, Glu209, Glu238, and Thr266. Residue Arg501 is modified to Asymmetric dimethylarginine; by autocatalysis.

It belongs to the class I-like SAM-binding methyltransferase superfamily. Protein arginine N-methyltransferase family. As to quaternary structure, homodimer. The dimethylated protein is the major form.

The protein localises to the cytoplasm. Its subcellular location is the nucleus. It catalyses the reaction L-arginyl-[protein] + 2 S-adenosyl-L-methionine = N(omega),N(omega)-dimethyl-L-arginyl-[protein] + 2 S-adenosyl-L-homocysteine + 2 H(+). Its function is as follows. Methylates (mono- and asymmetric dimethylation) the guanidino nitrogens of arginyl residues in proteins. May methylate histone H3 at 'Arg-17' and activate transcription via chromatin remodeling. This chain is Histone-arginine methyltransferase CARMER (Art4), found in Drosophila yakuba (Fruit fly).